We begin with the raw amino-acid sequence, 577 residues long: Aspartate--tRNA ligase (577 aa).

Glutamate 169 lines the L-aspartate pocket. Residues 193-196 (QLYK) are aspartate. Position 215 (arginine 215) interacts with L-aspartate. ATP contacts are provided by residues 215–217 (RDE) and glutamine 224. An L-aspartate-binding site is contributed by histidine 440. Glutamate 474 lines the ATP pocket. Arginine 481 lines the L-aspartate pocket. 526 to 529 (GIDR) is a binding site for ATP.

This sequence belongs to the class-II aminoacyl-tRNA synthetase family. Type 1 subfamily. In terms of assembly, homodimer.

The protein localises to the cytoplasm. The enzyme catalyses tRNA(Asp) + L-aspartate + ATP = L-aspartyl-tRNA(Asp) + AMP + diphosphate. Its function is as follows. Catalyzes the attachment of L-aspartate to tRNA(Asp) in a two-step reaction: L-aspartate is first activated by ATP to form Asp-AMP and then transferred to the acceptor end of tRNA(Asp). This is Aspartate--tRNA ligase from Mesoplasma florum (strain ATCC 33453 / NBRC 100688 / NCTC 11704 / L1) (Acholeplasma florum).